Here is a 311-residue protein sequence, read N- to C-terminus: Ornithine carbamoyltransferase (311 aa).

Carbamoyl phosphate contacts are provided by residues 52–55 (STRT), glutamine 79, arginine 103, and 129–132 (HPVQ). L-ornithine contacts are provided by residues asparagine 167, aspartate 226, and 230-231 (SM). Carbamoyl phosphate contacts are provided by residues 266 to 267 (CL) and arginine 294.

The protein belongs to the aspartate/ornithine carbamoyltransferase superfamily. OTCase family.

The protein resides in the cytoplasm. It catalyses the reaction carbamoyl phosphate + L-ornithine = L-citrulline + phosphate + H(+). It functions in the pathway amino-acid biosynthesis; L-arginine biosynthesis; L-arginine from L-ornithine and carbamoyl phosphate: step 1/3. In terms of biological role, reversibly catalyzes the transfer of the carbamoyl group from carbamoyl phosphate (CP) to the N(epsilon) atom of ornithine (ORN) to produce L-citrulline. The polypeptide is Ornithine carbamoyltransferase (Sorangium cellulosum (strain So ce56) (Polyangium cellulosum (strain So ce56))).